A 383-amino-acid polypeptide reads, in one-letter code: Probable sphingolipid long chain base-responsive protein pil2 (383 aa).

Serine 162 is modified (phosphoserine). Disordered stretches follow at residues 292-336 (PRTD…EDYQ) and 356-383 (GEED…PIAA). Positions 311–324 (TTSGTTHSYTSTGS) are enriched in low complexity. 2 stretches are compositionally biased toward polar residues: residues 325–336 (KRYSQMGTEDYQ) and 368–383 (VAET…PIAA).

In terms of processing, phosphorylated by ksg1 and ppk21. Phosphorylation is regulated by sphingolipid long chain bases (LCBs).

Functionally, negative regulator of cell wall integrity (CWI) in unstressed cells, probably by inhibiting protein kinase ksg1/ppk21 activity and regulating their downstream CWI pathways pck2-MAP kinase pathway and protein kinase gad8 pathway. Activity may be regulated by the transient increase of sphingolipid long chain bases (LCBs) during heat stress. The chain is Probable sphingolipid long chain base-responsive protein pil2 (pil2) from Schizosaccharomyces pombe (strain 972 / ATCC 24843) (Fission yeast).